A 76-amino-acid polypeptide reads, in one-letter code: uncharacterized protein (76 aa).

The helical transmembrane segment at 53-70 threads the bilayer; sequence STKLHIIWFCIFAIFIAV.

The protein localises to the membrane. This is an uncharacterized protein from Haemophilus influenzae (strain ATCC 51907 / DSM 11121 / KW20 / Rd).